A 424-amino-acid chain; its full sequence is MGSSSLSEDYRQCLERELRRGRAGVCGDPSLRAVLWQILVEDFDLHGALQDDALALLTDGLWGRADLAPALRGLARAFELLELAAVHLYLLPWRKEFTTIKTFSGGYVHVLKGVLSDDLLLKSFQKMGYVRRDSHRLMVTALPPACQLVQVALGCFALRLECEILGEVLAQLGTSVLPAEELLQARRASGDVASCVAWLQQRLAQDEEPPPLPPRGSPAAYRAPLDLYRDLQEDEGSEDASLYGEPSPGPDSPPAELAYRPPLWEQSAKLWGTGGRAWEPPAEELPQASSPPYGALEEGLEPEPSAFSFLSLRRELSRPGDLATPESSAAASPRRIRAEGVPASAYRSVSEPPGYQAHSCLSPGALPTLCCDTCRQLHAAHCAALPACRPGHSLRVLLGDAQRRLWLQRAQMDTLLYNSPGARP.

Disordered stretches follow at residues 233–258 (EDEGSEDASLYGEPSPGPDSPPAELA) and 273–300 (TGGRAWEPPAEELPQASSPPYGALEEGL). Ser327 is modified (phosphoserine).

It belongs to the SPATA2 family.

This Homo sapiens (Human) protein is Spermatogenesis-associated protein 2-like protein.